Here is a 525-residue protein sequence, read N- to C-terminus: ATP synthase subunit alpha (525 aa).

169-176 contributes to the ATP binding site; the sequence is GDRQTGKT.

The protein belongs to the ATPase alpha/beta chains family. As to quaternary structure, F-type ATPases have 2 components, CF(1) - the catalytic core - and CF(0) - the membrane proton channel. CF(1) has five subunits: alpha(3), beta(3), gamma(1), delta(1), epsilon(1). CF(0) has three main subunits: a(1), b(2) and c(9-12). The alpha and beta chains form an alternating ring which encloses part of the gamma chain. CF(1) is attached to CF(0) by a central stalk formed by the gamma and epsilon chains, while a peripheral stalk is formed by the delta and b chains.

It is found in the cell membrane. The catalysed reaction is ATP + H2O + 4 H(+)(in) = ADP + phosphate + 5 H(+)(out). Its function is as follows. Produces ATP from ADP in the presence of a proton gradient across the membrane. The alpha chain is a regulatory subunit. The chain is ATP synthase subunit alpha from Mesoplasma florum (strain ATCC 33453 / NBRC 100688 / NCTC 11704 / L1) (Acholeplasma florum).